The chain runs to 244 residues: L-xylulose reductase (244 aa).

M1 is modified (N-acetylmethionine). 11–40 (LVTGAGKGIGRGTVQALHATGARVVAVSRT) serves as a coordination point for NADP(+). Residue R21 is modified to Omega-N-methylarginine. The residue at position 46 (S46) is a Phosphoserine. S136 serves as a coordination point for substrate. The active-site Proton acceptor is the Y149. K153 is an NADP(+) binding site.

This sequence belongs to the short-chain dehydrogenases/reductases (SDR) family. Homotetramer. As to expression, highly expressed in kidney, liver and epididymis. In the epididymis, it is mainly expressed in the proximal and distal sections of the corpus region. Weakly or not expressed in brain, lung, heart, spleen and testis.

Its subcellular location is the membrane. The enzyme catalyses xylitol + NADP(+) = L-xylulose + NADPH + H(+). Its function is as follows. Catalyzes the NADPH-dependent reduction of several pentoses, tetroses, trioses, alpha-dicarbonyl compounds and L-xylulose. Participates in the uronate cycle of glucose metabolism. May play a role in the water absorption and cellular osmoregulation in the proximal renal tubules by producing xylitol, an osmolyte, thereby preventing osmolytic stress from occurring in the renal tubules. The protein is L-xylulose reductase (DCXR) of Homo sapiens (Human).